Reading from the N-terminus, the 145-residue chain is UPF0260 protein VC_1058 (145 aa).

It belongs to the UPF0260 family.

This Vibrio cholerae serotype O1 (strain ATCC 39315 / El Tor Inaba N16961) protein is UPF0260 protein VC_1058.